We begin with the raw amino-acid sequence, 484 residues long: Falcipain-2a (484 aa).

Over 1 to 35 (MDYNMDYAPHEVISQQGERFVDKYVDRKILKNKKS) the chain is Cytoplasmic. Residues 1–243 (MDYNMDYAPH…PLKNSKYLLD (243 aa)) constitute a propeptide, activation peptide. The Bipartite vacuolar targeting signal 1 motif lies at 16-25 (QGERFVDKYV). A helical; Signal-anchor for type II membrane protein transmembrane segment spans residues 36–56 (LLVIISLSVLSVVGFVLFYFT). Over 57–484 (PNSRKSDLFK…GTDAFIPLIE (428 aa)) the chain is Lumenal. Residue asparagine 67 is glycosylated (N-linked (GlcNAc...) asparagine). Residues 84–105 (KSPNGKKFIVSKIDEALSFYDS) carry the Bipartite vacuolar targeting signal 2 motif. Positions 244 to 260 (QMNYEEVIKKYKGNENF) match the Nose motif; required for the correct folding of the mature form motif. Cystine bridges form between cysteine 282/cysteine 323, cysteine 316/cysteine 357, cysteine 342/cysteine 362, and cysteine 411/cysteine 472. Cysteine 285 is an active-site residue. Residue histidine 417 is part of the active site. The short motif at 428 to 437 (EIVNPLTKKG) is the Arm motif; binds to host hemoglobin and required for the inhibitory interaction between the propeptide and the catalytic domain element. Asparagine 447 is an active-site residue.

The protein belongs to the peptidase C1 family. In terms of assembly, component of the hemozoin formation complex (HFC) composed of falcipains FP2A and/or FP2B, plasmepsins PMII, PMIII/HAP and PMIV, heme detoxifying protein HDP and falcilysin FLN. The HFC complex is involved in hemoglobin degradation and detoxification of heme in the food vacuole during the asexual blood stage. In terms of processing, auto-cleaved to remove the propeptide.

It localises to the vacuole. Its subcellular location is the membrane. Inhibited by cysteine protease inhibitor ICP. Inhibited by heme and heme analogs. Cysteine protease which cleaves native host hemoglobin and globin in the food vacuole during the asexual blood stage. The binding to host hemoglobin is pH-sensitive and only occurs at acidic pH. Cleaves ankyrin and protein 4.1, two components of host erythrocyte membrane cytoskeleton required for the stability of the erythrocyte membrane, and thus may be involved in parasite release. Preferentially cleaves substrates which have an arginine or lysine at the P1 position and a leucine or phenylalanine at the P2 position. The polypeptide is Falcipain-2a (Plasmodium falciparum (isolate 3D7)).